A 1162-amino-acid chain; its full sequence is Spike glycoprotein (1162 aa).

Residues 1 to 18 (MLVTPLLLVTLLCALCSA) form the signal peptide. The Extracellular segment spans residues 19 to 1095 (VLYDSSSYVY…LKTYIKWPWY (1077 aa)). Residues Asn51, Asn77, Asn103, Asn144, Asn163, Asn178, Asn212, Asn237, Asn247, Asn264, Asn276, Asn306, Asn425, Asn447, Asn513, Asn530, Asn579, Asn591, Asn669, Asn676, and Asn714 are each glycosylated (N-linked (GlcNAc...) asparagine; by host). The tract at residues 769-874 (IPFATQLQAR…QVDRLITGRL (106 aa)) is heptad repeat 1 (HR1). Residues 822–866 (QDVVSKQSAILTETMASLNKNFGAISSVIQEIYQQFDAIQANAQV) adopt a coiled-coil conformation. N-linked (GlcNAc...) asparagine; by host glycosylation is found at Asn947, Asn960, Asn979, Asn1014, Asn1038, Asn1051, and Asn1074. Residues 1024 to 1105 (NDDFDFNDEL…VWLAIAFATI (82 aa)) form a heptad repeat 2 (HR2) region. A coiled-coil region spans residues 1055 to 1083 (PILDIDSEIDRIQGVIQGLNDSLIDLEKL). A helical transmembrane segment spans residues 1096–1116 (VWLAIAFATIIFILILGWVFF). The Cytoplasmic segment spans residues 1117–1162 (MTGCCGCCCGCFGIMPLMSKCGKKSSYYTTFDNDVVTEQYRPKKSV). The Di-lysine motif signature appears at 1159–1162 (KKSV).

Belongs to the gammacoronaviruses spike protein family. Homotrimer; each monomer consists of a S1 and a S2 subunit. The resulting peplomers protrude from the virus surface as spikes. Post-translationally, specific enzymatic cleavages in vivo yield mature proteins. The precursor is processed into S1 and S2 by host cell furin or furin-like protease to yield the mature S1 and S2 proteins. The cleavage site between S1 and S2 requires the optimal sequence [KR]-X-[KR]-R. Additionally, a second cleavage leads to the release of a fusion peptide after viral attachment to host cell receptor.

It is found in the virion membrane. Its subcellular location is the host endoplasmic reticulum-Golgi intermediate compartment membrane. In terms of biological role, attaches the virion to the host cell membrane by interacting with sialic acids, initiating the infection. Functionally, mediates fusion of the virion and cellular membranes by acting as a class I viral fusion protein. Under the current model, the protein has at least 3 conformational states: pre-fusion native state, pre-hairpin intermediate state, and post-fusion hairpin state. During viral and target cell membrane fusion, the coiled coil regions (heptad repeats) assume a trimer-of-hairpins structure, positioning the fusion peptide in close proximity to the C-terminal region of the ectodomain. The formation of this structure appears to drive apposition and subsequent fusion of viral and target cell membranes. Its function is as follows. Acts as a viral fusion peptide after S2 cleavage occurring upon virus endocytosis. The chain is Spike glycoprotein from Avian infectious bronchitis virus (strain Beaudette) (IBV).